The sequence spans 290 residues: Phycobilisome 32.3 kDa linker polypeptide, phycocyanin-associated, rod (290 aa).

In terms of domain architecture, PBS-linker spans 1–179 (MPVTVAASRL…LQRGYANSDR (179 aa)). The region spanning 236-288 (DQVVRVEVAALSTPRYPRIRRSSRVFFVPVSRLSQKLQEIQRMGGRVASISPA) is the CpcD-like domain.

Belongs to the phycobilisome linker protein family.

It is found in the cellular thylakoid membrane. Its function is as follows. Rod linker protein, associated with phycocyanin. Linker polypeptides determine the state of aggregation and the location of the disk-shaped phycobiliprotein units within the phycobilisome and modulate their spectroscopic properties in order to mediate a directed and optimal energy transfer. The sequence is that of Phycobilisome 32.3 kDa linker polypeptide, phycocyanin-associated, rod (cpcC) from Picosynechococcus sp. (strain ATCC 27264 / PCC 7002 / PR-6) (Agmenellum quadruplicatum).